Reading from the N-terminus, the 152-residue chain is Ribosome maturation factor RimP (152 aa).

It belongs to the RimP family.

The protein localises to the cytoplasm. Required for maturation of 30S ribosomal subunits. In Alkalilimnicola ehrlichii (strain ATCC BAA-1101 / DSM 17681 / MLHE-1), this protein is Ribosome maturation factor RimP.